The following is a 335-amino-acid chain: Aliphatic sulfonates import ATP-binding protein SsuB (335 aa).

A disordered region spans residues 29–61 (DGDAQDAAVYERDGGAHAPPFASGGAPPDGDRA). In terms of domain architecture, ABC transporter spans 74 to 293 (VRLTRVSKRY…ARASAAFAAL (220 aa)). ATP is bound at residue 106-113 (GRSGCGKS). The disordered stretch occupies residues 308–335 (APAAPNAAGPEGASRGRAAPASGLRWAV).

It belongs to the ABC transporter superfamily. Aliphatic sulfonates importer (TC 3.A.1.17.2) family. In terms of assembly, the complex is composed of two ATP-binding proteins (SsuB), two transmembrane proteins (SsuC) and a solute-binding protein (SsuA).

Its subcellular location is the cell inner membrane. The enzyme catalyses ATP + H2O + aliphatic sulfonate-[sulfonate-binding protein]Side 1 = ADP + phosphate + aliphatic sulfonateSide 2 + [sulfonate-binding protein]Side 1.. Part of the ABC transporter complex SsuABC involved in aliphatic sulfonates import. Responsible for energy coupling to the transport system. This is Aliphatic sulfonates import ATP-binding protein SsuB from Burkholderia pseudomallei (strain 1710b).